We begin with the raw amino-acid sequence, 396 residues long: 8-amino-7-oxononanoate synthase (396 aa).

Arg-29 is a binding site for substrate. 116–117 (GY) lines the pyridoxal 5'-phosphate pocket. His-141 contributes to the substrate binding site. Pyridoxal 5'-phosphate-binding residues include Ser-187, His-215, and Thr-243. Lys-246 is subject to N6-(pyridoxal phosphate)lysine. Thr-360 serves as a coordination point for substrate.

This sequence belongs to the class-II pyridoxal-phosphate-dependent aminotransferase family. BioF subfamily. Homodimer. Pyridoxal 5'-phosphate serves as cofactor.

The catalysed reaction is 6-carboxyhexanoyl-[ACP] + L-alanine + H(+) = (8S)-8-amino-7-oxononanoate + holo-[ACP] + CO2. Its pathway is cofactor biosynthesis; biotin biosynthesis. In terms of biological role, catalyzes the decarboxylative condensation of pimeloyl-[acyl-carrier protein] and L-alanine to produce 8-amino-7-oxononanoate (AON), [acyl-carrier protein], and carbon dioxide. This is 8-amino-7-oxononanoate synthase from Nitrosospira multiformis (strain ATCC 25196 / NCIMB 11849 / C 71).